The primary structure comprises 185 residues: Ribosome-recycling factor (185 aa).

Belongs to the RRF family.

Its subcellular location is the cytoplasm. Its function is as follows. Responsible for the release of ribosomes from messenger RNA at the termination of protein biosynthesis. May increase the efficiency of translation by recycling ribosomes from one round of translation to another. This is Ribosome-recycling factor from Listeria innocua serovar 6a (strain ATCC BAA-680 / CLIP 11262).